The chain runs to 309 residues: Homoserine kinase (309 aa).

Residue 91–101 (PIGSGLGSSAC) coordinates ATP.

It belongs to the GHMP kinase family. Homoserine kinase subfamily.

It is found in the cytoplasm. The catalysed reaction is L-homoserine + ATP = O-phospho-L-homoserine + ADP + H(+). It participates in amino-acid biosynthesis; L-threonine biosynthesis; L-threonine from L-aspartate: step 4/5. Its function is as follows. Catalyzes the ATP-dependent phosphorylation of L-homoserine to L-homoserine phosphate. In Salmonella dublin (strain CT_02021853), this protein is Homoserine kinase.